The following is a 662-amino-acid chain: Threonine--tRNA ligase (662 aa).

The TGS domain maps to 1 to 64 (MSQSVSLTFP…ADGKIEIITR (64 aa)). The tract at residues 245–547 (DHRRLGREMD…LIENFAGHMP (303 aa)) is catalytic. The Zn(2+) site is built by cysteine 341, histidine 392, and histidine 524.

This sequence belongs to the class-II aminoacyl-tRNA synthetase family. Homodimer. It depends on Zn(2+) as a cofactor.

The protein resides in the cytoplasm. It catalyses the reaction tRNA(Thr) + L-threonine + ATP = L-threonyl-tRNA(Thr) + AMP + diphosphate + H(+). Functionally, catalyzes the attachment of threonine to tRNA(Thr) in a two-step reaction: L-threonine is first activated by ATP to form Thr-AMP and then transferred to the acceptor end of tRNA(Thr). Also edits incorrectly charged L-seryl-tRNA(Thr). The chain is Threonine--tRNA ligase from Rhizobium rhizogenes (strain K84 / ATCC BAA-868) (Agrobacterium radiobacter).